Consider the following 823-residue polypeptide: Fibroblast growth factor receptor 2 (823 aa).

An N-terminal signal peptide occupies residues 1-23; sequence MVSWDSGCLICLVVVTMAGLSLA. The Extracellular segment spans residues 24 to 379; the sequence is RPSFNLVVED…EFPTSPDYLE (356 aa). The 102-residue stretch at 27 to 128 folds into the Ig-like C2-type 1 domain; the sequence is FNLVVEDATL…DTLYFIVNVT (102 aa). C65 and C110 are disulfide-bonded. Residues N86, N126, and N148 are each glycosylated (N-linked (GlcNAc...) asparagine). Ig-like C2-type domains lie at 156 to 249 and 258 to 360; these read PYWT…YHLD and PILQ…AWLT. Residues 163-180 form a heparin-binding region; it reads KMEKRLHAVPAANTVKFR. C181 and C233 form a disulfide bridge. N230, N243, N267, N299, N320, and N333 each carry an N-linked (GlcNAc...) asparagine glycan. C280 and C344 are oxidised to a cystine. The chain crosses the membrane as a helical span at residues 380-400; sequence IAIYCIGVFLIACMVLTVILC. The Cytoplasmic segment spans residues 401–823; the sequence is RMKNTTKKPD…YQHMNGSVKT (423 aa). Y468 carries the phosphotyrosine; by autocatalysis modification. The 290-residue stretch at 483 to 772 folds into the Protein kinase domain; that stretch reads LTLGKPLGEG…LTLTTNEEYL (290 aa). Residues 489–497, K519, 567–569, and N573 each bind ATP; these read LGEGCFGQV and EYA. Y588 bears the Phosphotyrosine; by autocatalysis mark. The Proton acceptor role is filled by D628. Phosphotyrosine; by autocatalysis occurs at positions 658, 659, and 771.

This sequence belongs to the protein kinase superfamily. Tyr protein kinase family. Fibroblast growth factor receptor subfamily. As to quaternary structure, monomer. Homodimer after ligand binding. In terms of processing, autophosphorylated. Binding of FGF family members together with heparan sulfate proteoglycan or heparin promotes receptor dimerization and autophosphorylation on tyrosine residues. Autophosphorylation occurs in trans between the two FGFR molecules present in the dimer. N-glycosylated in the endoplasmic reticulum. The N-glycan chains undergo further maturation to an Endo H-resistant form in the Golgi apparatus. Post-translationally, ubiquitinated. FGFR2 is rapidly ubiquitinated after autophosphorylation, leading to internalization and degradation. Subject to degradation both in lysosomes and by the proteasome.

Its subcellular location is the cell membrane. It localises to the golgi apparatus. It is found in the cytoplasmic vesicle. The enzyme catalyses L-tyrosyl-[protein] + ATP = O-phospho-L-tyrosyl-[protein] + ADP + H(+). Present in an inactive conformation in the absence of bound ligand. Ligand binding leads to dimerization and activation by autophosphorylation on tyrosine residues. In terms of biological role, tyrosine-protein kinase that acts as a cell-surface receptor for fibroblast growth factors and plays an essential role in the regulation of cell proliferation, differentiation, migration and apoptosis, and in the regulation of embryonic development. Required for normal embryonic patterning, limb bud development, lung morphogenesis, osteogenesis and skin development. Plays an essential role in the regulation of osteoblast differentiation, proliferation and apoptosis, and is required for normal skeleton development. Promotes cell proliferation in keratinocytes and immature osteoblasts, but promotes apoptosis in differentiated osteoblasts. Phosphorylates PLCG1, FRS2 and PAK4. Ligand binding leads to the activation of several signaling cascades. Activation of PLCG1 leads to the production of the cellular signaling molecules diacylglycerol and inositol 1,4,5-trisphosphate. Phosphorylation of FRS2 triggers recruitment of GRB2, GAB1, PIK3R1 and SOS1, and mediates activation of RAS, MAPK1/ERK2, MAPK3/ERK1 and the MAP kinase signaling pathway, as well as of the AKT1 signaling pathway. FGFR2 signaling is down-regulated by ubiquitination, internalization and degradation. Mutations that lead to constitutive kinase activation or impair normal FGFR2 maturation, internalization and degradation lead to aberrant signaling. Over-expressed FGFR2 promotes activation of STAT1. In Gallus gallus (Chicken), this protein is Fibroblast growth factor receptor 2 (FGFR2).